We begin with the raw amino-acid sequence, 93 residues long: Conotoxin Mr105 (93 aa).

An N-terminal signal peptide occupies residues 1 to 22 (MQRGAVLLGVVALLVLWPQAGA). Residues 23–33 (ELYDVNDPDVR) constitute a propeptide that is removed on maturation.

Belongs to the F superfamily. Post-translationally, contains 4 disulfide bonds. In terms of tissue distribution, expressed by the venom duct.

It localises to the secreted. This Conus marmoreus (Marble cone) protein is Conotoxin Mr105.